A 184-amino-acid polypeptide reads, in one-letter code: UPF0149 protein PputGB1_5261 (184 aa).

It belongs to the UPF0149 family.

The chain is UPF0149 protein PputGB1_5261 from Pseudomonas putida (strain GB-1).